We begin with the raw amino-acid sequence, 321 residues long: Chloroplastic calcium uniporter protein (321 aa).

The transit peptide at 1 to 56 (MSSKKSLVQSLFNISKTYSRISGLTRMRPTKSGGIPPDAGDSGIRRRFLHKRAFFS) directs the protein to the chloroplast. Helical transmembrane passes span 223–243 (LWAG…LTFW) and 249–269 (VMEP…YAFF). A Selectivity filter motif is present at residues 247-255 (WDVMEPICF). Glu251 serves as a coordination point for Ca(2+).

This sequence belongs to the MCU (TC 1.A.77) family.

The protein localises to the plastid. The protein resides in the chloroplast membrane. The enzyme catalyses Ca(2+)(in) = Ca(2+)(out). Functionally, chloroplastic membrane calcium uniporter that mediates calcium uptake into chloroplast stroma. Constitutes a pore-forming and calcium-conducting subunit. Chloroplastic calcium homeostasis plays key roles in cellular physiology. Promotes calcium uptake into chloroplast stroma in response to osmotic-stress, fine-tuning cytosolic MAPK3/MAPK6 phosphorylation and affecting stomata opening. The protein is Chloroplastic calcium uniporter protein of Arabidopsis thaliana (Mouse-ear cress).